Here is a 201-residue protein sequence, read N- to C-terminus: Potassium-transporting ATPase KdpC subunit (201 aa).

The helical transmembrane segment at 7 to 27 threads the bilayer; it reads PALVLLVALTAITGLAYPLAV.

The protein belongs to the KdpC family. As to quaternary structure, the system is composed of three essential subunits: KdpA, KdpB and KdpC.

It localises to the cell inner membrane. In terms of biological role, part of the high-affinity ATP-driven potassium transport (or Kdp) system, which catalyzes the hydrolysis of ATP coupled with the electrogenic transport of potassium into the cytoplasm. This subunit acts as a catalytic chaperone that increases the ATP-binding affinity of the ATP-hydrolyzing subunit KdpB by the formation of a transient KdpB/KdpC/ATP ternary complex. The sequence is that of Potassium-transporting ATPase KdpC subunit from Methylorubrum extorquens (strain CM4 / NCIMB 13688) (Methylobacterium extorquens).